The following is a 407-amino-acid chain: Peptidase T (407 aa).

H78 provides a ligand contact to Zn(2+). D80 is a catalytic residue. D139 is a binding site for Zn(2+). E173 acts as the Proton acceptor in catalysis. The Zn(2+) site is built by E174, D196, and H378.

The protein belongs to the peptidase M20B family. It depends on Zn(2+) as a cofactor.

The protein resides in the cytoplasm. It carries out the reaction Release of the N-terminal residue from a tripeptide.. In terms of biological role, cleaves the N-terminal amino acid of tripeptides. The polypeptide is Peptidase T (Macrococcus caseolyticus (strain JCSC5402) (Macrococcoides caseolyticum)).